The primary structure comprises 64 residues: Large ribosomal subunit protein bL33c (64 aa).

This sequence belongs to the bacterial ribosomal protein bL33 family.

Its subcellular location is the plastid. The protein localises to the chloroplast. In Mesostigma viride (Green alga), this protein is Large ribosomal subunit protein bL33c (rpl33).